We begin with the raw amino-acid sequence, 605 residues long: Adenine deaminase (605 aa).

It belongs to the metallo-dependent hydrolases superfamily. Adenine deaminase family. The cofactor is Mn(2+).

It carries out the reaction adenine + H2O + H(+) = hypoxanthine + NH4(+). The chain is Adenine deaminase from Staphylothermus marinus (strain ATCC 43588 / DSM 3639 / JCM 9404 / F1).